A 184-amino-acid chain; its full sequence is MCVAPTPSHLVWVDCEMTGLNPERDELLEVAVVVTDKDLLPLDEGVNVVVSPSSEALGAMDNYVARMHRVSGLLDELSNGVPVSEAQAMVKEYITKHVKTGGIMSGNSIATDRLFITRYMPDVHAILHYRMIDVSSIKELAVRWAPEIYSGAPNKKGGHRAMADVLESIAELAYYREHFLTGTA.

The Exonuclease domain occupies 10 to 172; sequence LVWVDCEMTG…ADVLESIAEL (163 aa). Residue Tyr-129 is part of the active site.

The protein belongs to the oligoribonuclease family.

Its subcellular location is the cytoplasm. 3'-to-5' exoribonuclease specific for small oligoribonucleotides. The protein is Oligoribonuclease of Tropheryma whipplei (strain Twist) (Whipple's bacillus).